The following is a 276-amino-acid chain: Rhomboid protease GlpG (276 aa).

The next 6 membrane-spanning stretches (helical) occupy residues 94–114 (GPVT…MSLI), 142–162 (IFMH…WYLG), 169–189 (LGSG…GYVQ), 192–212 (FSGP…GYVW), 229–249 (LIIF…GMSM), and 250–270 (ANGA…VDTL). Residue serine 201 is the Nucleophile of the active site. Histidine 254 is an active-site residue.

The protein belongs to the peptidase S54 family.

It is found in the cell inner membrane. It catalyses the reaction Cleaves type-1 transmembrane domains using a catalytic dyad composed of serine and histidine that are contributed by different transmembrane domains.. In terms of biological role, rhomboid-type serine protease that catalyzes intramembrane proteolysis. The chain is Rhomboid protease GlpG from Salmonella dublin (strain CT_02021853).